Consider the following 312-residue polypeptide: Ribosomal RNA small subunit methyltransferase H (312 aa).

S-adenosyl-L-methionine contacts are provided by residues Gly-30–His-32, Asp-50, Phe-80, Asp-98, and Gln-105.

Belongs to the methyltransferase superfamily. RsmH family.

It is found in the cytoplasm. The catalysed reaction is cytidine(1402) in 16S rRNA + S-adenosyl-L-methionine = N(4)-methylcytidine(1402) in 16S rRNA + S-adenosyl-L-homocysteine + H(+). Specifically methylates the N4 position of cytidine in position 1402 (C1402) of 16S rRNA. The chain is Ribosomal RNA small subunit methyltransferase H from Lawsonia intracellularis (strain PHE/MN1-00).